The sequence spans 495 residues: Ankyrin repeat domain-containing protein 34A (495 aa).

ANK repeat units lie at residues 4–33, 37–72, 76–106, and 110–139; these read TEGH…YVNE, QGET…DPNI, LGRT…DPSV, and AGAS…AKGT. N5-methylglutamine is present on Q15. 2 stretches are compositionally biased toward polar residues: residues 147–162 and 180–191; these read DTSP…YLNS and VCTSPSEVQLQT. The segment at 147-495 is disordered; the sequence is DTSPSGTKKT…SLGGPGEPGR (349 aa). Positions 203–213 are enriched in basic and acidic residues; that stretch reads AQEEEEKRDVF. Residues 223–232 show a composition bias toward pro residues; the sequence is DPSPSEPLPK. A compositionally biased stretch (basic residues) spans 233–242; that stretch reads PPRHPPKPLK. Position 315 is a phosphothreonine (T315). Residues 375-385 are compositionally biased toward polar residues; it reads SVSSPRQSQES. Residues 462–472 are compositionally biased toward basic residues; that stretch reads RTKRKLVRRHS. Residues 485 to 495 show a composition bias toward gly residues; the sequence is QSLGGPGEPGR.

The protein belongs to the ANKRD34 family. In terms of processing, methylated at Gln-15 by N6AMT1.

This chain is Ankyrin repeat domain-containing protein 34A (Ankrd34a), found in Rattus norvegicus (Rat).